Consider the following 48-residue polypeptide: U-actitoxin-Cgg3 (48 aa).

Intrachain disulfides connect cysteine 5-cysteine 41, cysteine 7-cysteine 33, and cysteine 23-cysteine 42. The residue at position 46 (serine 46) is a Serine amide. The propeptide at 47-48 is removed in mature form; that stretch reads GR.

Belongs to the sea anemone type 3 (BDS) potassium channel toxin family.

The protein localises to the secreted. In terms of biological role, neurotoxin that induces paralysis when injected into crabs. May function in antimicrobial activity as it displays inhibitory activity towards the B.licheniformis enzyme subtilisin A (SUBTA) and the recombinant S.maltophilia protease 1 (rStmPr1) enzyme. Also displays inhibitory activity against various proteases including the porcine pancreatic elastase (PPE) and proteinase K (PK). This is U-actitoxin-Cgg3 from Condylactis gigantea (Giant Caribbean anemone).